The primary structure comprises 633 residues: Proline-rich receptor-like protein kinase PERK4 (633 aa).

Over residues 1–29 the composition is skewed to low complexity; the sequence is MASSPESAPPTNSTSSPSPPSNTNSTTSS. Positions 1–145 are disordered; that stretch reads MASSPESAPP…GSSGGGGGGR (145 aa). Over 1–151 the chain is Extracellular; the sequence is MASSPESAPP…GGGRSNTNTA (151 aa). Residues Asn-12 and Asn-24 are each glycosylated (N-linked (GlcNAc...) asparagine). 2 stretches are compositionally biased toward pro residues: residues 30–41 and 48–65; these read PPAPSPPSPTPP and SPPPDSTSPPAPQAPNPP. Asn-66 is a glycosylation site (N-linked (GlcNAc...) asparagine). Residues 77–90 show a composition bias toward gly residues; the sequence is QGGGGERGNGGNNG. The span at 106–135 shows a compositional bias: low complexity; it reads SRSNGDNGGSRSSPPGDTGGSRSDNPPSSG. Positions 136 to 145 are enriched in gly residues; sequence GSSGGGGGGR. A helical membrane pass occupies residues 152-172; it reads IIVGVLVGAGLLMIVLIIVCL. Residues 173–633 lie on the Cytoplasmic side of the membrane; the sequence is RRKKKRKDSF…MGTKSPTPPK (461 aa). Over residues 193–222 the composition is skewed to low complexity; it reads QYYGNNNNNNASQNYPNWHLNSQGQNQQST. The interval 193–255 is disordered; sequence QYYGNNNNNN…SMYSGPSRPV (63 aa). Thr-273 carries the post-translational modification Phosphothreonine. The 279-residue stretch at 284–562 folds into the Protein kinase domain; the sequence is FTDANLLGQG…VRALEGEVSL (279 aa). ATP is bound by residues 290 to 298 and Lys-312; that span reads LGQGGFGYV. The residue at position 357 (Tyr-357) is a Phosphotyrosine. Catalysis depends on Asp-408, which acts as the Proton acceptor. Phosphoserine is present on Ser-441. Phosphothreonine occurs at positions 442 and 447. Tyr-455 is subject to Phosphotyrosine. The span at 608-619 shows a compositional bias: polar residues; that stretch reads FPVSDCEGTSSN. The disordered stretch occupies residues 608–633; that stretch reads FPVSDCEGTSSNDSRDMGTKSPTPPK.

This sequence belongs to the protein kinase superfamily. Ser/Thr protein kinase family. In terms of tissue distribution, mostly expressed in inflorescence bolts. Also present in roots, stems, germinated seeds, cotyledons, pollen, stamen and stigma.

It is found in the cell membrane. The enzyme catalyses L-seryl-[protein] + ATP = O-phospho-L-seryl-[protein] + ADP + H(+). The catalysed reaction is L-threonyl-[protein] + ATP = O-phospho-L-threonyl-[protein] + ADP + H(+). With respect to regulation, activated by ABA and Ca(2+). Required during abscisic acid (ABA)-mediated activation of Ca(2+) channels. Regulates ABA signaling pathways. Modulates the expression of genes related to cell elongation and ABA signaling during root growth. The protein is Proline-rich receptor-like protein kinase PERK4 (PERK4) of Arabidopsis thaliana (Mouse-ear cress).